A 215-amino-acid chain; its full sequence is Thiamine-phosphate synthase (215 aa).

4-amino-2-methyl-5-(diphosphooxymethyl)pyrimidine is bound by residues 43–47 (QLRDK) and Asn-75. 2 residues coordinate Mg(2+): Asp-76 and Asp-95. Ser-114 contributes to the 4-amino-2-methyl-5-(diphosphooxymethyl)pyrimidine binding site. 141 to 143 (TPT) contacts 2-[(2R,5Z)-2-carboxy-4-methylthiazol-5(2H)-ylidene]ethyl phosphate. Lys-144 is a binding site for 4-amino-2-methyl-5-(diphosphooxymethyl)pyrimidine. Residue Gly-172 participates in 2-[(2R,5Z)-2-carboxy-4-methylthiazol-5(2H)-ylidene]ethyl phosphate binding.

This sequence belongs to the thiamine-phosphate synthase family. Mg(2+) is required as a cofactor.

It carries out the reaction 2-[(2R,5Z)-2-carboxy-4-methylthiazol-5(2H)-ylidene]ethyl phosphate + 4-amino-2-methyl-5-(diphosphooxymethyl)pyrimidine + 2 H(+) = thiamine phosphate + CO2 + diphosphate. The enzyme catalyses 2-(2-carboxy-4-methylthiazol-5-yl)ethyl phosphate + 4-amino-2-methyl-5-(diphosphooxymethyl)pyrimidine + 2 H(+) = thiamine phosphate + CO2 + diphosphate. It catalyses the reaction 4-methyl-5-(2-phosphooxyethyl)-thiazole + 4-amino-2-methyl-5-(diphosphooxymethyl)pyrimidine + H(+) = thiamine phosphate + diphosphate. Its pathway is cofactor biosynthesis; thiamine diphosphate biosynthesis; thiamine phosphate from 4-amino-2-methyl-5-diphosphomethylpyrimidine and 4-methyl-5-(2-phosphoethyl)-thiazole: step 1/1. Functionally, condenses 4-methyl-5-(beta-hydroxyethyl)thiazole monophosphate (THZ-P) and 2-methyl-4-amino-5-hydroxymethyl pyrimidine pyrophosphate (HMP-PP) to form thiamine monophosphate (TMP). This Streptomyces avermitilis (strain ATCC 31267 / DSM 46492 / JCM 5070 / NBRC 14893 / NCIMB 12804 / NRRL 8165 / MA-4680) protein is Thiamine-phosphate synthase.